The sequence spans 463 residues: ATP-dependent protease ATPase subunit HslU (463 aa).

Residues Val21, 63 to 68, Asp276, Glu341, and Arg413 each bind ATP; that span reads GVGKTE.

It belongs to the ClpX chaperone family. HslU subfamily. A double ring-shaped homohexamer of HslV is capped on each side by a ring-shaped HslU homohexamer. The assembly of the HslU/HslV complex is dependent on binding of ATP.

It is found in the cytoplasm. In terms of biological role, ATPase subunit of a proteasome-like degradation complex; this subunit has chaperone activity. The binding of ATP and its subsequent hydrolysis by HslU are essential for unfolding of protein substrates subsequently hydrolyzed by HslV. HslU recognizes the N-terminal part of its protein substrates and unfolds these before they are guided to HslV for hydrolysis. The sequence is that of ATP-dependent protease ATPase subunit HslU from Thermotoga petrophila (strain ATCC BAA-488 / DSM 13995 / JCM 10881 / RKU-1).